Consider the following 412-residue polypeptide: L-cysteine:1D-myo-inositol 2-amino-2-deoxy-alpha-D-glucopyranoside ligase (412 aa).

A Zn(2+)-binding site is contributed by cysteine 43. L-cysteinyl-5'-AMP-binding positions include cysteine 43 to threonine 46, threonine 58, and asparagine 81 to threonine 83. A 'HIGH' region motif is present at residues isoleucine 45–histidine 55. A 'ERGGDP' region motif is present at residues glutamate 186–proline 191. Tryptophan 227 is a binding site for L-cysteinyl-5'-AMP. A Zn(2+)-binding site is contributed by cysteine 231. Position 249-251 (glycine 249–aspartate 251) interacts with L-cysteinyl-5'-AMP. Histidine 256 lines the Zn(2+) pocket. An L-cysteinyl-5'-AMP-binding site is contributed by isoleucine 283. Positions lysine 289–serine 293 match the 'KMSKS' region motif.

The protein belongs to the class-I aminoacyl-tRNA synthetase family. MshC subfamily. In terms of assembly, monomer. Requires Zn(2+) as cofactor.

The enzyme catalyses 1D-myo-inositol 2-amino-2-deoxy-alpha-D-glucopyranoside + L-cysteine + ATP = 1D-myo-inositol 2-(L-cysteinylamino)-2-deoxy-alpha-D-glucopyranoside + AMP + diphosphate + H(+). Functionally, catalyzes the ATP-dependent condensation of GlcN-Ins and L-cysteine to form L-Cys-GlcN-Ins. The protein is L-cysteine:1D-myo-inositol 2-amino-2-deoxy-alpha-D-glucopyranoside ligase of Salinispora arenicola (strain CNS-205).